The chain runs to 750 residues: Photosystem I P700 chlorophyll a apoprotein A1 (750 aa).

8 helical membrane-spanning segments follow: residues 72–95 (VFSAHFGQLAVIFIWLSGMYFHGA), 158–181 (LYSTAIGGLVMAGLMLFAGWFHYH), 197–221 (LNHHLAGLLGLGSLSWAGHQIHVSL), 293–311 (TAHHHLAIAVLFLVAGHMY), 348–371 (WHAQLAINLALFGSLSIIVAHHMY), 387–413 (LSIFTHHTWIGGFCIVGGAAHAAIFMV), 435–457 (AIISHLNWVCIFLGFHSFGLYIH), and 532–550 (FLVHHIHAFTIHVTVLILL). [4Fe-4S] cluster is bound by residues C574 and C583. 2 consecutive transmembrane segments (helical) span residues 590 to 611 (HVFLGLFWMYNSLSIAIFHFSW) and 664 to 686 (LSAYGLMFLGAHFVWAFSLMFLF). A chlorophyll a'-binding site is contributed by H675. Residues M683 and Y691 each contribute to the chlorophyll a site. W692 contributes to the phylloquinone binding site. The helical transmembrane segment at 724–744 (AVGVAHYLLGGIATTWAFFLA) threads the bilayer.

This sequence belongs to the PsaA/PsaB family. In terms of assembly, the PsaA/B heterodimer binds the P700 chlorophyll special pair and subsequent electron acceptors. PSI consists of a core antenna complex that captures photons, and an electron transfer chain that converts photonic excitation into a charge separation. The eukaryotic PSI reaction center is composed of at least 11 subunits. P700 is a chlorophyll a/chlorophyll a' dimer, A0 is one or more chlorophyll a, A1 is one or both phylloquinones and FX is a shared 4Fe-4S iron-sulfur center. serves as cofactor.

The protein resides in the plastid. Its subcellular location is the chloroplast thylakoid membrane. The enzyme catalyses reduced [plastocyanin] + hnu + oxidized [2Fe-2S]-[ferredoxin] = oxidized [plastocyanin] + reduced [2Fe-2S]-[ferredoxin]. Its function is as follows. PsaA and PsaB bind P700, the primary electron donor of photosystem I (PSI), as well as the electron acceptors A0, A1 and FX. PSI is a plastocyanin-ferredoxin oxidoreductase, converting photonic excitation into a charge separation, which transfers an electron from the donor P700 chlorophyll pair to the spectroscopically characterized acceptors A0, A1, FX, FA and FB in turn. Oxidized P700 is reduced on the lumenal side of the thylakoid membrane by plastocyanin. In Chlorokybus atmophyticus (Soil alga), this protein is Photosystem I P700 chlorophyll a apoprotein A1.